A 1447-amino-acid chain; its full sequence is Bud site selection protein 4 (1447 aa).

The segment covering Met1–Asp16 has biased composition (basic and acidic residues). Disordered regions lie at residues Met1–Trp38 and Asn57–Thr76. The residue at position 10 (Ser10) is a Phosphoserine. Composition is skewed to polar residues over residues Thr22–Glu32 and Arg59–Thr76. Phosphoserine occurs at positions 78, 81, 91, 96, and 167. Residues Asn272–Thr316 are disordered. Residues Leu277–Thr316 are compositionally biased toward polar residues. At Thr365 the chain carries Phosphothreonine. Ser367 carries the phosphoserine modification. The interval His444–Asn479 is disordered. At Ser511 the chain carries Phosphoserine. Residues Lys529–Leu591 are disordered. Residues Ser538–Glu548 are compositionally biased toward polar residues. Residues Ala549–Glu580 show a composition bias toward basic and acidic residues. Ser616 is modified (phosphoserine). Residues Ala648–Val664 are compositionally biased toward polar residues. Residues Ala648–Thr673 are disordered. The tract at residues Glu768–Lys879 is interaction with IQG1. Residues Ser805 and Ser811 each carry the phosphoserine modification. Positions Asn1302–Glu1413 constitute a PH domain.

In terms of assembly, interacts with AXL1, AXL2, IQG1 and SEC3. Post-translationally, phosphorylated by CDC28.

The protein localises to the bud neck. Required for establishment of the axial budding pattern in haploid cells. Cooperates with other bud site selection proteins to recognize a spatial landmark during mitosis and they subsequently become a landmark for downstream polarity establishment factors that coordinate axial budding and cytokinesis. Involved in the septin organization at the bud neck. This chain is Bud site selection protein 4 (BUD4), found in Saccharomyces cerevisiae (strain ATCC 204508 / S288c) (Baker's yeast).